A 410-amino-acid chain; its full sequence is Polyadenylation and cleavage factor homolog 5 (410 aa).

The segment covering 1–17 has biased composition (polar residues); sequence MASNGSFSAQRNANAGT. The interval 1–32 is disordered; sequence MASNGSFSAQRNANAGTTMKRRNDNRGYGGGI. Residues 191-214 are a coiled coil; the sequence is SKELTDLLSLLNNEKEKKTSEASN. Residues 247-269 form a C2H2-type zinc finger; that stretch reads RQCTSCGVRFKCQEEHSKHMDWH.

In terms of assembly, forms a complex with cleavage and polyadenylation specificity factor (CPSF) subunits CSTF77, CLPS3, PCFS4 and PCFS1.

The protein localises to the nucleus. The sequence is that of Polyadenylation and cleavage factor homolog 5 from Arabidopsis thaliana (Mouse-ear cress).